A 318-amino-acid chain; its full sequence is NADH-ubiquinone oxidoreductase chain 1 (318 aa).

Helical transmembrane passes span 2-22 (FMIN…FLTL), 70-90 (MFII…IPLP), 100-120 (LGIL…LWSG), 147-167 (AIIL…TLII), 171-191 (YLWL…STLA), 217-237 (AGPF…MNIF), 254-276 (LYSI…IRAS), and 294-314 (LPLT…LSSI).

The protein belongs to the complex I subunit 1 family. Core subunit of respiratory chain NADH dehydrogenase (Complex I) which is composed of 45 different subunits.

It is found in the mitochondrion inner membrane. It catalyses the reaction a ubiquinone + NADH + 5 H(+)(in) = a ubiquinol + NAD(+) + 4 H(+)(out). Core subunit of the mitochondrial membrane respiratory chain NADH dehydrogenase (Complex I) which catalyzes electron transfer from NADH through the respiratory chain, using ubiquinone as an electron acceptor. Essential for the catalytic activity and assembly of complex I. In Equus asinus (Donkey), this protein is NADH-ubiquinone oxidoreductase chain 1 (MT-ND1).